We begin with the raw amino-acid sequence, 345 residues long: OVARIAN TUMOR DOMAIN-containing deubiquitinating enzyme 9 (345 aa).

The OTU domain maps to 204 to 328 (LVENKIEGDG…EVHYNSIYPE (125 aa)). D212 is a catalytic residue. The active-site Nucleophile is the C215. Residue H321 is part of the active site.

The protein belongs to the peptidase C85 family.

It carries out the reaction Thiol-dependent hydrolysis of ester, thioester, amide, peptide and isopeptide bonds formed by the C-terminal Gly of ubiquitin (a 76-residue protein attached to proteins as an intracellular targeting signal).. In terms of biological role, hydrolase that can remove conjugated ubiquitin from proteins in vitro and may therefore play an important regulatory role at the level of protein turnover by preventing degradation. Cysteine protease with a preference for 'Lys-63' and 'Lys-48' -linked ubiquitin (UB) tetramers as substrates. Also cleaves RUB-GST fusion. This chain is OVARIAN TUMOR DOMAIN-containing deubiquitinating enzyme 9, found in Arabidopsis thaliana (Mouse-ear cress).